Consider the following 545-residue polypeptide: CTP synthase (545 aa).

An amidoligase domain region spans residues 1–266; the sequence is MATNYIFVTG…DSFVCDRFRL (266 aa). Residue serine 14 coordinates CTP. Position 14 (serine 14) interacts with UTP. ATP-binding positions include 15–20 and aspartate 72; that span reads SLGKGI. The Mg(2+) site is built by aspartate 72 and glutamate 140. CTP is bound by residues 147–149, 187–192, and lysine 223; these read DIE and KTKPTQ. UTP is bound by residues 187 to 192 and lysine 223; that span reads KTKPTQ. Residue 239-241 participates in ATP binding; the sequence is KDV. The Glutamine amidotransferase type-1 domain maps to 291–542; it reads TIGMVGKYVE…VAAAKAYQDS (252 aa). Glycine 352 serves as a coordination point for L-glutamine. Cysteine 379 acts as the Nucleophile; for glutamine hydrolysis in catalysis. Residues 380 to 383, glutamate 403, and arginine 470 each bind L-glutamine; that span reads LGMQ. Catalysis depends on residues histidine 515 and glutamate 517.

The protein belongs to the CTP synthase family. As to quaternary structure, homotetramer.

The catalysed reaction is UTP + L-glutamine + ATP + H2O = CTP + L-glutamate + ADP + phosphate + 2 H(+). It catalyses the reaction L-glutamine + H2O = L-glutamate + NH4(+). The enzyme catalyses UTP + NH4(+) + ATP = CTP + ADP + phosphate + 2 H(+). Its pathway is pyrimidine metabolism; CTP biosynthesis via de novo pathway; CTP from UDP: step 2/2. Its activity is regulated as follows. Allosterically activated by GTP, when glutamine is the substrate; GTP has no effect on the reaction when ammonia is the substrate. The allosteric effector GTP functions by stabilizing the protein conformation that binds the tetrahedral intermediate(s) formed during glutamine hydrolysis. Inhibited by the product CTP, via allosteric rather than competitive inhibition. Its function is as follows. Catalyzes the ATP-dependent amination of UTP to CTP with either L-glutamine or ammonia as the source of nitrogen. Regulates intracellular CTP levels through interactions with the four ribonucleotide triphosphates. This Haemophilus ducreyi (strain 35000HP / ATCC 700724) protein is CTP synthase.